The following is a 370-amino-acid chain: D-alanine--D-alanine ligase (370 aa).

In terms of domain architecture, ATP-grasp spans 142 to 348 (KQILTHHHIQ…YTALIDQLIQ (207 aa)). ATP is bound at residue 172–227 (QAHVGDHLFIKPANQGSSIGIHKAENEQEYLDGLADAFKYDYKILVEESIDNPREV). The Mg(2+) site is built by aspartate 302, glutamate 315, and asparagine 317.

It belongs to the D-alanine--D-alanine ligase family. Requires Mg(2+) as cofactor. The cofactor is Mn(2+).

The protein resides in the cytoplasm. It carries out the reaction 2 D-alanine + ATP = D-alanyl-D-alanine + ADP + phosphate + H(+). Its pathway is cell wall biogenesis; peptidoglycan biosynthesis. Its function is as follows. Cell wall formation. The sequence is that of D-alanine--D-alanine ligase from Lactiplantibacillus plantarum (strain ATCC BAA-793 / NCIMB 8826 / WCFS1) (Lactobacillus plantarum).